The sequence spans 311 residues: Phosphoribosylaminoimidazole-succinocarboxamide synthase (311 aa).

The protein belongs to the SAICAR synthetase family.

The enzyme catalyses 5-amino-1-(5-phospho-D-ribosyl)imidazole-4-carboxylate + L-aspartate + ATP = (2S)-2-[5-amino-1-(5-phospho-beta-D-ribosyl)imidazole-4-carboxamido]succinate + ADP + phosphate + 2 H(+). It functions in the pathway purine metabolism; IMP biosynthesis via de novo pathway; 5-amino-1-(5-phospho-D-ribosyl)imidazole-4-carboxamide from 5-amino-1-(5-phospho-D-ribosyl)imidazole-4-carboxylate: step 1/2. The polypeptide is Phosphoribosylaminoimidazole-succinocarboxamide synthase (Aromatoleum aromaticum (strain DSM 19018 / LMG 30748 / EbN1) (Azoarcus sp. (strain EbN1))).